A 260-amino-acid polypeptide reads, in one-letter code: 3-oxoadipate CoA-transferase subunit B (260 aa).

Glu51 is an active-site residue.

It belongs to the 3-oxoacid CoA-transferase subunit B family. As to quaternary structure, heterotetramer composed of 2 A and 2 B subunits.

The enzyme catalyses 3-oxoadipate + succinyl-CoA = 3-oxoadipyl-CoA + succinate. It functions in the pathway aromatic compound metabolism; beta-ketoadipate pathway; acetyl-CoA and succinyl-CoA from 3-oxoadipate: step 1/2. The chain is 3-oxoadipate CoA-transferase subunit B (catJ) from Pseudomonas knackmussii (strain DSM 6978 / CCUG 54928 / LMG 23759 / B13).